The primary structure comprises 756 residues: Xylosyl- and glucuronyltransferase LARGE1 (756 aa).

Topologically, residues Met-1–Lys-10 are cytoplasmic. The helical; Signal-anchor for type II membrane protein transmembrane segment at Phe-11–Ala-31 threads the bilayer. The Lumenal segment spans residues Gly-32–Ser-756. Disordered regions lie at residues Ser-43–Ser-64 and Gln-82–Thr-108. Positions Pro-44–Ser-58 are enriched in polar residues. The stretch at Arg-53–Arg-95 forms a coiled coil. 3 N-linked (GlcNAc...) asparagine glycosylation sites follow: Asn-97, Asn-122, and Asn-148. The interval Ile-138–Arg-413 is xylosyltransferase activity. Positions 242 and 244 each coordinate Mn(2+). An N-linked (GlcNAc...) asparagine glycan is attached at Asn-272. Residues Arg-414–Ser-756 form a glucuronyltransferase activity region. Residues Asp-563 and Asp-565 each coordinate Mn(2+).

The protein in the C-terminal section; belongs to the glycosyltransferase 49 family. In the N-terminal section; belongs to the glycosyltransferase 8 family. Interacts with DAG1 (via the N-terminal domain of alpha-DAG1); the interaction increases binding of DAG1 to laminin. Interacts with B4GAT1. Mn(2+) is required as a cofactor. Ubiquitous. Highest expression in heart, diaphragm and brain, where it is especially found in cerebral cortex, hippocampus, and trigeminal ganglion.

The protein localises to the golgi apparatus membrane. It catalyses the reaction 3-O-[beta-D-GlcA-(1-&gt;3)-beta-D-Xyl-(1-&gt;4)-Rib-ol-P-Rib-ol-P-3-beta-D-GalNAc-(1-&gt;3)-beta-D-GlcNAc-(1-&gt;4)-(O-6-P-alpha-D-Man)]-Thr-[protein] + UDP-alpha-D-xylose = 3-O-[alpha-D-Xyl-(1-&gt;3)-beta-D-GlcA-(1-&gt;4)-beta-D-Xyl-(1-&gt;4)-Rib-ol-P-Rib-ol-P-3-beta-D-GalNAc-(1-&gt;3)-beta-D-GlcNAc-(1-&gt;4)-(O-6-P-alpha-D-Man)]-Thr-[protein] + UDP + H(+). The catalysed reaction is 3-O-{(1-&gt;[3)-alpha-D-Xyl-(1-&gt;3)-beta-D-GlcA-(1-&gt;](n)-4)-beta-D-Xyl-(1-&gt;4)-Rib-ol-P-Rib-ol-P-3-beta-D-GalNAc-(1-&gt;3)-beta-D-GlcNAc-(1-&gt;4)-O-6-P-alpha-D-Man}-L-Thr-[protein] + UDP-alpha-D-glucuronate = 3-O-{beta-D-GlcA-(1-&gt;[3)-alpha-D-Xyl-(1-&gt;3)-beta-D-GlcA-(1-&gt;](n)-4)-beta-D-Xyl-(1-&gt;4)-Rib-ol-P-Rib-ol-P-3-beta-D-GalNAc-(1-&gt;3)-beta-D-GlcNAc-(1-&gt;4)-O-6-P-alpha-D-Man}-L-Thr-[protein] + UDP + H(+). The enzyme catalyses 3-O-{beta-D-GlcA-(1-&gt;[3)-alpha-D-Xyl-(1-&gt;3)-beta-D-GlcA-(1-&gt;](n)-4)-beta-D-Xyl-(1-&gt;4)-Rib-ol-P-Rib-ol-P-3-beta-D-GalNAc-(1-&gt;3)-beta-D-GlcNAc-(1-&gt;4)-O-6-P-alpha-D-Man}-L-Thr-[protein] + UDP-alpha-D-xylose = 3-O-{(1-&gt;[3)-alpha-D-Xyl-(1-&gt;3)-beta-D-GlcA-(1-&gt;](n+1)-4)-beta-D-Xyl-(1-&gt;4)-Rib-ol-P-Rib-ol-P-3-beta-D-GalNAc-(1-&gt;3)-beta-D-GlcNAc-(1-&gt;4)-O-6-P-alpha-D-Man}-L-Thr-[protein] + UDP + H(+). It participates in protein modification; protein glycosylation. Its function is as follows. Bifunctional glycosyltransferase with both alpha-1,3-xylosyltransferase and beta-1,3-glucuronyltransferase activities involved in the maturation of alpha-dystroglycan (DAG1) by glycosylation leading to DAG1 binding to laminin G-like domain-containing extracellular proteins with high affinity. Elongates the glucuronyl-beta-1,4-xylose-beta disaccharide primer structure initiated by B4GAT1 by adding repeating units [-3-Xylose-alpha-1,3-GlcA-beta-1-] to produce a heteropolysaccharide. Requires the phosphorylation of core M3 (O-mannosyl trisaccharide) by POMK to elongate the glucuronyl-beta-1,4-xylose-beta disaccharide primer. Plays a key role in skeletal muscle function and regeneration. The protein is Xylosyl- and glucuronyltransferase LARGE1 of Mus musculus (Mouse).